A 292-amino-acid polypeptide reads, in one-letter code: Protease HtpX homolog (292 aa).

The next 2 helical transmembrane spans lie at 7-27 (TFIL…LIGG) and 29-49 (GGAV…WWNS). H131 provides a ligand contact to Zn(2+). E132 is a catalytic residue. H135 serves as a coordination point for Zn(2+). A run of 2 helical transmembrane segments spans residues 148-168 (ATMA…SMFG) and 178-198 (LAAI…QMAI). Residue E203 participates in Zn(2+) binding.

It belongs to the peptidase M48B family. Zn(2+) is required as a cofactor.

It is found in the cell inner membrane. The polypeptide is Protease HtpX homolog (Paracoccus denitrificans (strain Pd 1222)).